A 223-amino-acid polypeptide reads, in one-letter code: Matrix protein (223 aa).

Over residues 1–10 (MLTLFKKGKP) the composition is skewed to basic residues. Positions 1-23 (MLTLFKKGKPKGGSVDDRNSSYR) are disordered. The segment covering 14-23 (SVDDRNSSYR) has biased composition (basic and acidic residues).

As to quaternary structure, homomultimer. Interacts with nucleoprotein and with the cytoplasmic domain of glycoprotein.

It localises to the virion membrane. The protein localises to the host endomembrane system. In terms of biological role, plays a major role in assembly and budding of virion. Completely covers the ribonucleoprotein coil and keep it in condensed bullet-shaped form. Inhibits viral transcription and stimulates replication. The sequence is that of Matrix protein (M) from Bos taurus (Bovine).